A 245-amino-acid polypeptide reads, in one-letter code: Transmembrane protein 69 (245 aa).

5 helical membrane-spanning segments follow: residues 97–117, 122–142, 159–179, 185–205, and 216–236; these read ALYI…LMVI, IPVL…FLGG, YINL…ILFS, AIVT…FLLP, and IVST…ENIY.

It localises to the membrane. The chain is Transmembrane protein 69 (Tmem69) from Mus musculus (Mouse).